Reading from the N-terminus, the 662-residue chain is MSENKFLPICKDDMIERGWEQCDFVLVTADAYIDHHSFGTAIISRVLENAGYKVGIIAQPDWKSVDDFKKLGRPRLGFLVNGGNMDPMVNHYTVSKKLRKKDLYTPKGEMGKRPDRATIVYCNKIREAYKDVNIVIGGIEASLRRFAHYDYWDNKVRKSILVDSGADLLVYGMSEKQIVEVADFLNQGFDGKYIRHIPGTCYIADSLDEIYEEHIVLPSFKEVSSDKRTYAECFKIQYDEQDPVRGRTLVQEHNGKYVVINKPEMPLSREELDRVYALPYQKTYHPIYEKDGGIAAIEEVKFSIVSSRGCSGNCSFCAITFHQGRIVTSRSEDSIVEEAEEITKYDDFKGYIHDIGGPTANFRKPACKKQLTLGACKHKRCMSPGICKNMEVDHREYLHLLRRVRKLPGIKKVFIRSGLRYDYIMADKDDTFFKELVEHHVSGQLKVAPEHVSPNVLKYMGKPAGKTYDEFRRKFFRITERLGKKQFIIPYLMSSHPGCKLEDAIMLAEYLRDINYQPEQVQDFYPTPGTLSTTMFYTGLDPLTMEEVYIPRSKEEKAMQRALLQFKNPKNYNIVYDALVKVGREDLIGNGPKCLIRDKNSFGKGNNHSNHKSGGRKSRNENSGRRESEDKKRSSHSKKQRGNKSRGFDQKSQRSSKGKKRR.

The 272-residue stretch at 296–567 (AIEEVKFSIV…AMQRALLQFK (272 aa)) folds into the Radical SAM core domain. [4Fe-4S] cluster-binding residues include C310, C314, and C317. Positions 596–662 (IRDKNSFGKG…QRSSKGKKRR (67 aa)) are disordered. The span at 618–632 (SRNENSGRRESEDKK) shows a compositional bias: basic and acidic residues. Basic residues predominate over residues 633–644 (RSSHSKKQRGNK).

It belongs to the UPF0313 family. The cofactor is [4Fe-4S] cluster.

The sequence is that of UPF0313 protein CPF_1407 from Clostridium perfringens (strain ATCC 13124 / DSM 756 / JCM 1290 / NCIMB 6125 / NCTC 8237 / Type A).